Reading from the N-terminus, the 397-residue chain is Protochlorophyllide reductase, chloroplastic (397 aa).

A chloroplast-targeting transit peptide spans 1-57 (MALTMSAKSVSARAQVSSKAQAAPAVAVSGRTSSRVMPAPALAARSSVARTPLVVCA).

The protein belongs to the short-chain dehydrogenases/reductases (SDR) family. POR subfamily.

Its subcellular location is the plastid. The protein resides in the chloroplast. It carries out the reaction chlorophyllide a + NADP(+) = protochlorophyllide a + NADPH + H(+). Its pathway is porphyrin-containing compound metabolism; chlorophyll biosynthesis. Functionally, phototransformation of protochlorophyllide (Pchlide) to chlorophyllide (Chlide). This is Protochlorophyllide reductase, chloroplastic (PORA) from Chlamydomonas reinhardtii (Chlamydomonas smithii).